A 284-amino-acid chain; its full sequence is Bifunctional protein FolD (284 aa).

Residues 166-168 (GAS) and isoleucine 232 each bind NADP(+).

This sequence belongs to the tetrahydrofolate dehydrogenase/cyclohydrolase family. In terms of assembly, homodimer.

It carries out the reaction (6R)-5,10-methylene-5,6,7,8-tetrahydrofolate + NADP(+) = (6R)-5,10-methenyltetrahydrofolate + NADPH. It catalyses the reaction (6R)-5,10-methenyltetrahydrofolate + H2O = (6R)-10-formyltetrahydrofolate + H(+). Its pathway is one-carbon metabolism; tetrahydrofolate interconversion. Catalyzes the oxidation of 5,10-methylenetetrahydrofolate to 5,10-methenyltetrahydrofolate and then the hydrolysis of 5,10-methenyltetrahydrofolate to 10-formyltetrahydrofolate. The polypeptide is Bifunctional protein FolD (Shewanella sp. (strain W3-18-1)).